A 369-amino-acid chain; its full sequence is Phospho-N-acetylmuramoyl-pentapeptide-transferase (369 aa).

The next 10 membrane-spanning stretches (helical) occupy residues Ile2 to Phe22, Gly54 to Leu74, Gly80 to Leu100, Phe113 to Val133, Ala158 to Ile178, Leu195 to Phe215, Pro241 to Trp261, Ile268 to Leu288, Leu293 to Ile313, and Phe347 to Leu367.

The protein belongs to the glycosyltransferase 4 family. MraY subfamily. Requires Mg(2+) as cofactor.

The protein localises to the cell membrane. The catalysed reaction is UDP-N-acetyl-alpha-D-muramoyl-L-alanyl-gamma-D-glutamyl-meso-2,6-diaminopimeloyl-D-alanyl-D-alanine + di-trans,octa-cis-undecaprenyl phosphate = di-trans,octa-cis-undecaprenyl diphospho-N-acetyl-alpha-D-muramoyl-L-alanyl-D-glutamyl-meso-2,6-diaminopimeloyl-D-alanyl-D-alanine + UMP. It functions in the pathway cell wall biogenesis; peptidoglycan biosynthesis. Its function is as follows. Catalyzes the initial step of the lipid cycle reactions in the biosynthesis of the cell wall peptidoglycan: transfers peptidoglycan precursor phospho-MurNAc-pentapeptide from UDP-MurNAc-pentapeptide onto the lipid carrier undecaprenyl phosphate, yielding undecaprenyl-pyrophosphoryl-MurNAc-pentapeptide, known as lipid I. The polypeptide is Phospho-N-acetylmuramoyl-pentapeptide-transferase (Tropheryma whipplei (strain Twist) (Whipple's bacillus)).